The primary structure comprises 348 residues: MPAAPDKDKALELALAQIDKQYGKGSVMRLGEEGRAPIAVIPTGAIALDVALGIGGLPRGRVIEVYGPESSGKTTVALHAVANAQRNGGIAAFIDAEHALDPDYAKKLGVDTDALLVSQPDTGEQALEIADMLVRSGALDILVIDSVAALVPRAEIEGEMGDSHVGLQARLMSQALRKMTGAMNNSGTTAIFINQLREKIGVMFGSPETTTGGKALKFYASVRLDVRRIETLKDGGEAVGNRTRVKVVKNKMAPPFKQAEFDILYGHGISREGSLIDMGVDQAILRKSGAWYTYEGDQLGQGKENARKFLRDNPDIANEIEKRIKEKLGIGAQLDAEAVEAVPAPVDF.

ATP is bound at residue Gly67–Thr74.

The protein belongs to the RecA family.

Its subcellular location is the cytoplasm. In terms of biological role, can catalyze the hydrolysis of ATP in the presence of single-stranded DNA, the ATP-dependent uptake of single-stranded DNA by duplex DNA, and the ATP-dependent hybridization of homologous single-stranded DNAs. It interacts with LexA causing its activation and leading to its autocatalytic cleavage. In Amycolatopsis mediterranei (strain U-32), this protein is Protein RecA.